Reading from the N-terminus, the 241-residue chain is Uridylate kinase (241 aa).

Residue 15–18 participates in ATP binding; that stretch reads KLSG. Residues 23-28 are involved in allosteric activation by GTP; it reads GTEGFG. Glycine 57 contributes to the UMP binding site. Glycine 58 and arginine 62 together coordinate ATP. UMP-binding positions include aspartate 77 and 138–145; that span reads TGNPFFTT. Residues threonine 165, tyrosine 171, and aspartate 174 each contribute to the ATP site.

The protein belongs to the UMP kinase family. In terms of assembly, homohexamer.

It is found in the cytoplasm. The enzyme catalyses UMP + ATP = UDP + ADP. Its pathway is pyrimidine metabolism; CTP biosynthesis via de novo pathway; UDP from UMP (UMPK route): step 1/1. Its activity is regulated as follows. Allosterically activated by GTP. Inhibited by UTP. Catalyzes the reversible phosphorylation of UMP to UDP. The protein is Uridylate kinase of Pectobacterium atrosepticum (strain SCRI 1043 / ATCC BAA-672) (Erwinia carotovora subsp. atroseptica).